The chain runs to 282 residues: 1,4-dihydroxy-6-naphtoate synthase (282 aa).

Residues 57-59 and 109-110 contribute to the substrate site; these read KVS and TA. The active-site Proton acceptor is the histidine 153.

The protein belongs to the MqnA/MqnD family. MqnD subfamily.

The catalysed reaction is cyclic dehypoxanthinylfutalosinate = 1,4-dihydroxy-6-naphthoate + dihydroxyacetone. It participates in quinol/quinone metabolism; menaquinone biosynthesis. In terms of biological role, catalyzes the conversion of cyclic dehypoxanthine futalosine (cyclic DHFL) into 1,4-dihydroxy-6-naphthoate, a step in the biosynthesis of menaquinone (MK, vitamin K2). This Streptomyces coelicolor (strain ATCC BAA-471 / A3(2) / M145) protein is 1,4-dihydroxy-6-naphtoate synthase.